Consider the following 991-residue polypeptide: Toll-like receptor 13 (991 aa).

The first 68 residues, 1–68 (MSGLYRILVQ…GFSLPPVAET (68 aa)), serve as a signal peptide directing secretion. Over 69 to 783 (YGFNKCTQYE…DAMCNFDLGK (715 aa)) the chain is Extracellular. N-linked (GlcNAc...) asparagine glycosylation is found at Asn93, Asn109, and Asn125. LRR repeat units follow at residues 104–125 (YTTH…SFTN), 128–149 (ALVD…AFRG), 152–174 (NLTL…EGLS), 175–196 (SLKT…AFTP), 199–220 (KLKY…LEAV), 225–246 (CLER…PRSL), 248–268 (SLTH…SALS), 271–292 (NLTN…YLKT), 295–315 (QLKS…SAKH), 318–338 (NLRA…DMKT), 348–368 (KLET…KQLA), 372–394 (RLLF…EFNA), 397–418 (SLQK…TWSS), 421–442 (NLTS…AFSP), 445–466 (HLEF…AFSG), 469–490 (ALKE…SFTQ), 493–514 (NLEV…TFRP), 517–538 (KLQS…SFSG), 541–562 (NLRS…LFSG), 565–585 (KLLI…RTLQ), 594–617 (SLKQ…FFQG), 620–641 (SLQE…QFDP), 644–665 (NLTK…LNAS), 672–693 (RLKI…MFSS), and 696–716 (SLQV…SHLK). Residues Asn152 and Asn167 are each glycosylated (N-linked (GlcNAc...) asparagine). 7 N-linked (GlcNAc...) asparagine glycosylation sites follow: Asn209, Asn233, Asn263, Asn271, Asn274, Asn300, and Asn310. 4 N-linked (GlcNAc...) asparagine glycosylation sites follow: Asn357, Asn388, Asn413, and Asn421. 2 N-linked (GlcNAc...) asparagine glycosylation sites follow: Asn644 and Asn663. Asn711 and Asn742 each carry an N-linked (GlcNAc...) asparagine glycan. One can recognise an LRRCT domain in the interval 729–779 (NKLQCTCDNLWFKNWSMNTEEVHIPFLRSYPCQQPGSQSLLIDFDDAMCNF). A helical membrane pass occupies residues 784–804 (VYFLCSFSMVLSTMVFSWFST). The Cytoplasmic segment spans residues 805–991 (KMIASLWYGL…KENTHLIVVE (187 aa)). In terms of domain architecture, TIR spans 832–975 (FLYDAFVSFS…LFWARIRNAL (144 aa)).

It belongs to the Toll-like receptor family. As to quaternary structure, binds MYD88 via their respective TIR domains. Interacts with UNC93B1.

Its subcellular location is the endosome membrane. Its function is as follows. Component of innate and adaptive immunity that recognizes and binds 23S rRNA from bacteria. TLRs (Toll-like receptors) control host immune response against pathogens through recognition of molecular patterns specific to microorganisms. Acts via MYD88 and TRAF6, leading to NF-kappa-B activation, cytokine secretion and the inflammatory response. Specifically binds the 5'-CGGAAAGACC-3' sequence on bacterial 23S rRNA, a sequence also bound by MLS group antibiotics (including erythromycin). May also recognize vesicular stomatitis virus; however, these data require additional evidences. The sequence is that of Toll-like receptor 13 (Tlr13) from Mus musculus (Mouse).